Consider the following 597-residue polypeptide: Arginine--tRNA ligase (597 aa).

The short motif at 125-135 is the 'HIGH' region element; that stretch reads PNTNKPLHLGH.

The protein belongs to the class-I aminoacyl-tRNA synthetase family. Monomer.

It is found in the cytoplasm. The catalysed reaction is tRNA(Arg) + L-arginine + ATP = L-arginyl-tRNA(Arg) + AMP + diphosphate. The chain is Arginine--tRNA ligase from Bacteroides fragilis (strain ATCC 25285 / DSM 2151 / CCUG 4856 / JCM 11019 / LMG 10263 / NCTC 9343 / Onslow / VPI 2553 / EN-2).